Consider the following 335-residue polypeptide: Acetyl-coenzyme A carboxylase carboxyl transferase subunit alpha (335 aa).

The region spanning 40-294 (QLETLAARRR…KEAIEKHLNA (255 aa)) is the CoA carboxyltransferase C-terminal domain.

The protein belongs to the AccA family. Acetyl-CoA carboxylase is a heterohexamer composed of biotin carboxyl carrier protein (AccB), biotin carboxylase (AccC) and two subunits each of ACCase subunit alpha (AccA) and ACCase subunit beta (AccD).

The protein localises to the cytoplasm. The catalysed reaction is N(6)-carboxybiotinyl-L-lysyl-[protein] + acetyl-CoA = N(6)-biotinyl-L-lysyl-[protein] + malonyl-CoA. The protein operates within lipid metabolism; malonyl-CoA biosynthesis; malonyl-CoA from acetyl-CoA: step 1/1. Component of the acetyl coenzyme A carboxylase (ACC) complex. First, biotin carboxylase catalyzes the carboxylation of biotin on its carrier protein (BCCP) and then the CO(2) group is transferred by the carboxyltransferase to acetyl-CoA to form malonyl-CoA. The sequence is that of Acetyl-coenzyme A carboxylase carboxyl transferase subunit alpha from Prochlorococcus marinus (strain MIT 9301).